Reading from the N-terminus, the 204-residue chain is Ciliary microtubule inner protein 7 (204 aa).

The protein resides in the cell projection. Its subcellular location is the cilium. The chain is Ciliary microtubule inner protein 7 from Homo sapiens (Human).